Reading from the N-terminus, the 427-residue chain is Glutamate-1-semialdehyde 2,1-aminomutase (427 aa).

K265 is modified (N6-(pyridoxal phosphate)lysine).

This sequence belongs to the class-III pyridoxal-phosphate-dependent aminotransferase family. HemL subfamily. In terms of assembly, homodimer. The cofactor is pyridoxal 5'-phosphate.

It localises to the cytoplasm. It carries out the reaction (S)-4-amino-5-oxopentanoate = 5-aminolevulinate. Its pathway is porphyrin-containing compound metabolism; protoporphyrin-IX biosynthesis; 5-aminolevulinate from L-glutamyl-tRNA(Glu): step 2/2. The sequence is that of Glutamate-1-semialdehyde 2,1-aminomutase from Nitratiruptor sp. (strain SB155-2).